Reading from the N-terminus, the 275-residue chain is 2,3,4,5-tetrahydropyridine-2,6-dicarboxylate N-succinyltransferase (275 aa).

The protein belongs to the transferase hexapeptide repeat family.

Its subcellular location is the cytoplasm. It carries out the reaction (S)-2,3,4,5-tetrahydrodipicolinate + succinyl-CoA + H2O = (S)-2-succinylamino-6-oxoheptanedioate + CoA. It functions in the pathway amino-acid biosynthesis; L-lysine biosynthesis via DAP pathway; LL-2,6-diaminopimelate from (S)-tetrahydrodipicolinate (succinylase route): step 1/3. This chain is 2,3,4,5-tetrahydropyridine-2,6-dicarboxylate N-succinyltransferase, found in Burkholderia ambifaria (strain MC40-6).